The primary structure comprises 294 residues: Nucleophosmin (294 aa).

Over residues 121 to 133 the composition is skewed to acidic residues; it reads LEEEPESEDEEED. The disordered stretch occupies residues 121–244; sequence LEEEPESEDE…PKTPKVPLSL (124 aa). The Nuclear localization signal motif lies at 153–158; sequence PQKKPK. Positions 161 to 186 are enriched in acidic residues; the sequence is EDDEDDDEDEDDDEDDEDDLDDDEEE. A Nuclear localization signal motif is present at residues 190–196; that stretch reads PMKKPAR. Over residues 223-233 the composition is skewed to basic and acidic residues; sequence KTPDSKKDKSL.

Belongs to the nucleoplasmin family. As to quaternary structure, decamer formed by two pentameric rings associated in a head-to-head fashion. Post-translationally, phosphorylated.

It is found in the cytoplasm. It localises to the nucleus. The protein localises to the nucleoplasm. The protein resides in the nucleolus. Functionally, acts as a chaperonin for the core histones H3, H2B and H4. Associated with nucleolar ribonucleoprotein structures and bind single-stranded nucleic acids. It may function in the assembly and/or transport of ribosome. May stimulate endonuclease activity on apurinic/apyrimidinic (AP) double-stranded DNA. May inhibit endonuclease activity on AP single-stranded RNA. This chain is Nucleophosmin (NPM1), found in Gallus gallus (Chicken).